Consider the following 139-residue polypeptide: D-ribose pyranase (139 aa).

The active-site Proton donor is the His20. Substrate is bound by residues Asp28, His106, and Phe128–Asn130.

This sequence belongs to the RbsD / FucU family. RbsD subfamily. Homodecamer.

It localises to the cytoplasm. It catalyses the reaction beta-D-ribopyranose = beta-D-ribofuranose. Its pathway is carbohydrate metabolism; D-ribose degradation; D-ribose 5-phosphate from beta-D-ribopyranose: step 1/2. Catalyzes the interconversion of beta-pyran and beta-furan forms of D-ribose. The polypeptide is D-ribose pyranase (Klebsiella pneumoniae (strain 342)).